We begin with the raw amino-acid sequence, 449 residues long: XK-related protein 2 (449 aa).

Helical transmembrane passes span 35–55, 68–88, 98–118, 174–194, 204–224, 241–261, 269–289, 306–326, 357–377, and 382–402; these read FSIL…LYMV, TYTF…LIFV, LSLF…EAMI, IQAF…SLIS, LMAF…MLAI, LCIT…LVLF, AVPF…VKFW, VGTL…NFSC, LVEN…VLLN, and LIAV…LLFF.

The protein belongs to the XK family.

It is found in the membrane. This Mus musculus (Mouse) protein is XK-related protein 2 (Xkrx).